The primary structure comprises 272 residues: MSKNPLGTLVVRIWKAKNLPNKALVGKQSPYCVCRVGEVVKRTQTDKRSGQEPSWNAVLEFNIPSESYHIMKITVFHEGFRKHPHLIGDTVLSFEKAMKEELQSEWYELKNEFQFAGELSVQFKFIPTDPLYFDRASSKPVLQFPYSSVAALTPVPKKPSKPSKPRKKVPVSHPLPPTPPSREEHVSVPRESSLFTYEDDPLPSFPSPYMVDDYYTQDVFVSDNVNDYSYGVQNPTNPRLSVEDYDANHSSLPPVPPPHLILPTASSSQIFH.

In terms of domain architecture, C2 spans 1 to 107 (MSKNPLGTLV…MKEELQSEWY (107 aa)). The interval 155–187 (VPKKPSKPSKPRKKVPVSHPLPPTPPSREEHVS) is disordered. A compositionally biased stretch (basic residues) spans 158–170 (KPSKPSKPRKKVP).

The protein belongs to the INN1/fic1 family. Interacts with cdc15 and imp2.

It is found in the cytoplasm. It localises to the nucleus. Functionally, involved in the ingression of the plasma membrane during cytokinesis, leading to the separation of the daughter cells. Unlike its S.cerevisiae ortholog INN1, it does not play an essential role, probably because the actinomyosin ring is connected to the cell cortex by many more proteins. In Schizosaccharomyces pombe (strain 972 / ATCC 24843) (Fission yeast), this protein is Ingression protein fic1 (fic1).